We begin with the raw amino-acid sequence, 86 residues long: Anti-adapter protein IraP (86 aa).

Positions 1 to 36 form a coiled coil; sequence MKNLIAELLLKLAQKEEESKELVAQVEALEIIVTAM.

It belongs to the IraP family. Interacts with RssB.

The protein resides in the cytoplasm. Functionally, inhibits RpoS proteolysis by regulating RssB activity, thereby increasing the stability of the sigma stress factor RpoS especially during phosphate and magnesium starvation, but also in stationary phase and during nitrogen starvation. Its effect on RpoS stability is due to its interaction with RssB, which probably blocks the interaction of RssB with RpoS, and the consequent delivery of the RssB-RpoS complex to the ClpXP protein degradation pathway. The polypeptide is Anti-adapter protein IraP (Salmonella choleraesuis (strain SC-B67)).